The primary structure comprises 374 residues: Alanine racemase (374 aa).

The Proton acceptor; specific for D-alanine role is filled by Lys40. N6-(pyridoxal phosphate)lysine is present on Lys40. Arg139 provides a ligand contact to substrate. Tyr261 functions as the Proton acceptor; specific for L-alanine in the catalytic mechanism. Met309 contacts substrate.

Belongs to the alanine racemase family. The cofactor is pyridoxal 5'-phosphate.

It carries out the reaction L-alanine = D-alanine. The protein operates within amino-acid biosynthesis; D-alanine biosynthesis; D-alanine from L-alanine: step 1/1. Its function is as follows. Catalyzes the interconversion of L-alanine and D-alanine. May also act on other amino acids. This is Alanine racemase (alr) from Rhodospirillum rubrum (strain ATCC 11170 / ATH 1.1.1 / DSM 467 / LMG 4362 / NCIMB 8255 / S1).